Here is a 71-residue protein sequence, read N- to C-terminus: Antitoxin VapB26 (71 aa).

Functionally, antitoxin component of a type II toxin-antitoxin (TA) system. Upon expression in M.smegmatis neutralizes the effect of cognate toxin VapC26. The sequence is that of Antitoxin VapB26 (vapB26) from Mycobacterium tuberculosis (strain ATCC 25618 / H37Rv).